The following is a 260-amino-acid chain: Phosphate import ATP-binding protein PstB (260 aa).

An ABC transporter domain is found at 14–255 (VQVKNLAFYY…PRNKQTEDYI (242 aa)). 46 to 53 (GPSGCGKS) is an ATP binding site.

Belongs to the ABC transporter superfamily. Phosphate importer (TC 3.A.1.7) family. As to quaternary structure, the complex is composed of two ATP-binding proteins (PstB), two transmembrane proteins (PstC and PstA) and a solute-binding protein (PstS).

It localises to the cell inner membrane. It carries out the reaction phosphate(out) + ATP + H2O = ADP + 2 phosphate(in) + H(+). Its function is as follows. Part of the ABC transporter complex PstSACB involved in phosphate import. Responsible for energy coupling to the transport system. This Syntrophotalea carbinolica (strain DSM 2380 / NBRC 103641 / GraBd1) (Pelobacter carbinolicus) protein is Phosphate import ATP-binding protein PstB.